Here is a 1465-residue protein sequence, read N- to C-terminus: DNA polymerase alpha catalytic subunit (1465 aa).

Disordered regions lie at residues 20 to 39 (GSFA…GRQE) and 105 to 135 (LEDD…PSVT). Over residues 26 to 35 (RARREKKSKK) the composition is skewed to basic residues. T180 is modified (phosphothreonine). Phosphoserine is present on residues S192 and S215. K230 is subject to N6-acetyllysine. Residues 261–297 (DESMDTEKVDEKPVTAKTWDQETEPVERVEHEADPER) form a disordered region. Composition is skewed to basic and acidic residues over residues 265–274 (DTEKVDEKPV) and 285–297 (PVER…DPER). The tract at residues 654–719 (RINECKVPYW…YHLSELVQQI (66 aa)) is DNA-binding. An N6-succinyllysine modification is found at K974. The tract at residues 1249 to 1380 (QFRVHQYHKD…NGPLCPVCMK (132 aa)) is DNA-binding. Residues C1287, C1290, C1314, C1319, C1352, C1357, C1375, and C1378 each contribute to the Zn(2+) site. Residues 1287–1317 (CPSCGTENIYDNVFEGSGLDMEPSLYRCSNV) form a CysA-type zinc finger. The CysB motif signature appears at 1352–1378 (CEEPTCCSRLRRLPLHFSRNGPLCPVC).

The protein belongs to the DNA polymerase type-B family. As to quaternary structure, component of the alpha DNA polymerase complex (also known as the alpha DNA polymerase-primase complex) consisting of four subunits: the catalytic subunit POLA1, the regulatory subunit POLA2, and the primase complex subunits PRIM1 and PRIM2 respectively. Within the complex, POLA1 directly interacts with PRIM2. Interacts with PARP1; this interaction functions as part of the control of replication fork progression. Interacts with MCM10 and WDHD1; these interactions recruit the polymerase alpha complex to the pre-replicative complex bound to DNA. Interacts with RPA1; this interaction stabilizes the replicative complex and reduces the misincorporation rate of DNA polymerase alpha by acting as a fidelity clamp. Expressed in those zones containing proliferating cells in the developing embryonic neocortex, as well as in the lateral and medial ganglionic eminences. After birth, expressed in cells that remain proliferating in the ventricular and subventricular zone of the striatum.

The protein localises to the nucleus. It is found in the cytoplasm. The protein resides in the cytosol. The enzyme catalyses DNA(n) + a 2'-deoxyribonucleoside 5'-triphosphate = DNA(n+1) + diphosphate. In terms of biological role, catalytic subunit of the DNA polymerase alpha complex (also known as the alpha DNA polymerase-primase complex) which plays an essential role in the initiation of DNA synthesis. During the S phase of the cell cycle, the DNA polymerase alpha complex (composed of a catalytic subunit POLA1, a regulatory subunit POLA2 and two primase subunits PRIM1 and PRIM2) is recruited to DNA at the replicative forks via direct interactions with MCM10 and WDHD1. The primase subunit of the polymerase alpha complex initiates DNA synthesis by oligomerising short RNA primers on both leading and lagging strands. These primers are initially extended by the polymerase alpha catalytic subunit and subsequently transferred to polymerase delta and polymerase epsilon for processive synthesis on the lagging and leading strand, respectively. The reason this transfer occurs is because the polymerase alpha has limited processivity and lacks intrinsic 3' exonuclease activity for proofreading error, and therefore is not well suited for replicating long complexes. In the cytosol, responsible for a substantial proportion of the physiological concentration of cytosolic RNA:DNA hybrids, which are necessary to prevent spontaneous activation of type I interferon responses. This is DNA polymerase alpha catalytic subunit (Pola1) from Mus musculus (Mouse).